We begin with the raw amino-acid sequence, 199 residues long: Peroxynitrite isomerase (199 aa).

Residues 21–27 (GEWEGRG) carry the GXWXGXG motif. Histidine 190 serves as a coordination point for heme b.

The protein belongs to the nitrobindin family. In terms of assembly, homodimer. Heme b serves as cofactor.

The enzyme catalyses peroxynitrite = nitrate. It participates in nitrogen metabolism. Heme-binding protein able to scavenge peroxynitrite and to protect free L-tyrosine against peroxynitrite-mediated nitration, by acting as a peroxynitrite isomerase that converts peroxynitrite to nitrate. Therefore, this protein likely plays a role in peroxynitrite sensing and in the detoxification of reactive nitrogen and oxygen species (RNS and ROS, respectively). Is able to bind nitric oxide (NO) in vitro, but may act as a sensor of peroxynitrite levels in vivo. The chain is Peroxynitrite isomerase from Paenarthrobacter aurescens (strain TC1).